A 98-amino-acid chain; its full sequence is Large ribosomal subunit protein uL23 (98 aa).

Belongs to the universal ribosomal protein uL23 family. In terms of assembly, part of the 50S ribosomal subunit. Contacts protein L29, and trigger factor when it is bound to the ribosome.

In terms of biological role, one of the early assembly proteins it binds 23S rRNA. One of the proteins that surrounds the polypeptide exit tunnel on the outside of the ribosome. Forms the main docking site for trigger factor binding to the ribosome. The protein is Large ribosomal subunit protein uL23 of Clostridium kluyveri (strain NBRC 12016).